A 106-amino-acid chain; its full sequence is Small ribosomal subunit protein bS6 (106 aa).

Belongs to the bacterial ribosomal protein bS6 family.

Binds together with bS18 to 16S ribosomal RNA. This Cyanothece sp. (strain PCC 7425 / ATCC 29141) protein is Small ribosomal subunit protein bS6.